The chain runs to 445 residues: GTPase Der (445 aa).

EngA-type G domains are found at residues 3–167 (PVIA…YAGQ) and 180–353 (VKIA…AAAM). GTP-binding positions include 9 to 16 (GRPNVGKS), 56 to 60 (DTGGF), 119 to 122 (NKAE), 186 to 193 (GRPNVGKS), 233 to 237 (DTAGL), and 298 to 301 (NKWD). Positions 354 to 438 (AKLPTPKLTR…PLRIEFRSST (85 aa)) constitute a KH-like domain.

Belongs to the TRAFAC class TrmE-Era-EngA-EngB-Septin-like GTPase superfamily. EngA (Der) GTPase family. As to quaternary structure, associates with the 50S ribosomal subunit.

In terms of biological role, GTPase that plays an essential role in the late steps of ribosome biogenesis. This chain is GTPase Der, found in Paraburkholderia xenovorans (strain LB400).